The chain runs to 81 residues: MSHSVKIYDTCIGCTQCVRACPTDVLEMIPWDGCKAKQIASAPRTEDCVGCKRCESACPTDFLSVRVYLGNETTRSMGLPY.

2 4Fe-4S ferredoxin-type domains span residues 2–31 and 39–68; these read SHSV…MIPW and IASA…VRVY. [4Fe-4S] cluster-binding residues include Cys11, Cys14, Cys17, Cys21, Cys48, Cys51, Cys54, and Cys58.

As to quaternary structure, the eukaryotic PSI reaction center is composed of at least 11 subunits. Requires [4Fe-4S] cluster as cofactor.

The protein resides in the plastid. Its subcellular location is the chloroplast thylakoid membrane. It carries out the reaction reduced [plastocyanin] + hnu + oxidized [2Fe-2S]-[ferredoxin] = oxidized [plastocyanin] + reduced [2Fe-2S]-[ferredoxin]. Functionally, apoprotein for the two 4Fe-4S centers FA and FB of photosystem I (PSI); essential for photochemical activity. FB is the terminal electron acceptor of PSI, donating electrons to ferredoxin. The C-terminus interacts with PsaA/B/D and helps assemble the protein into the PSI complex. Required for binding of PsaD and PsaE to PSI. PSI is a plastocyanin-ferredoxin oxidoreductase, converting photonic excitation into a charge separation, which transfers an electron from the donor P700 chlorophyll pair to the spectroscopically characterized acceptors A0, A1, FX, FA and FB in turn. This Acorus calamus (Sweet flag) protein is Photosystem I iron-sulfur center.